An 875-amino-acid polypeptide reads, in one-letter code: GATOR2 complex protein MIOS (875 aa).

6 WD repeats span residues 61–100 (PYMK…NSKF), 111–155 (KHAR…TPDI), 182–221 (GQND…QKMF), 223–261 (NTKA…KPVL), 265–306 (EQPK…TPIG), and 395–437 (RLRA…KQYT). The C4-type zinc-finger motif lies at 735 to 781 (VSCNFCGKSISYSCSAVPHQGRGFSQYGVSGSPTKSKVTSCPGCRKP). Positions 737 and 740 each coordinate Zn(2+). A phosphoserine mark is found at serine 759 and serine 766. Zn(2+) contacts are provided by cysteine 775, cysteine 778, cysteine 788, cysteine 827, cysteine 830, histidine 832, histidine 835, histidine 838, cysteine 849, cysteine 854, and cysteine 858. An RING-type; atypical zinc finger spans residues 782-863 (LPRCALCLIN…CTCKCMQLDT (82 aa)).

This sequence belongs to the WD repeat mio family. In terms of assembly, component of the GATOR2 subcomplex, composed of MIOS, SEC13, SEH1L, WDR24 and WDR59. The GATOR2 complex interacts with CASTOR1 and CASTOR2; the interaction is negatively regulated by arginine. CASTOR1 and CASTOR2 convey leucine availability via direct interaction with MIOS. The GATOR2 complex interacts with SESN1, SESN2 and SESN3; the interaction is negatively regulated by amino acids. Interacts with SAR1A and SAR1B; the interaction is direct, disrupted by leucine and mediates the interaction of SAR1A or SAR1B with the GATOR2 complex to negatively regulate the TORC1 signaling upon leucine deprivation.

The protein localises to the lysosome membrane. Its activity is regulated as follows. The GATOR2 complex is negatively regulated by the upstream amino acid sensors CASTOR1 and SESN2, which sequester the GATOR2 complex in absence of amino acids. In the presence of abundant amino acids, GATOR2 is released from CASTOR1 and SESN2 and activated. In terms of biological role, as a component of the GATOR2 complex, functions as an activator of the amino acid-sensing branch of the mTORC1 signaling pathway. The GATOR2 complex indirectly activates mTORC1 through the inhibition of the GATOR1 subcomplex. GATOR2 probably acts as an E3 ubiquitin-protein ligase toward GATOR1. In the presence of abundant amino acids, the GATOR2 complex mediates ubiquitination of the NPRL2 core component of the GATOR1 complex, leading to GATOR1 inactivation. In the absence of amino acids, GATOR2 is inhibited, activating the GATOR1 complex. Within the GATOR2 complex, MIOS is required to prevent autoubiquitination of WDR24, the catalytic subunit of the complex. The GATOR2 complex is required for brain myelination. The sequence is that of GATOR2 complex protein MIOS from Pongo abelii (Sumatran orangutan).